The primary structure comprises 452 residues: 2-succinylbenzoate--CoA ligase (452 aa).

Belongs to the ATP-dependent AMP-binding enzyme family. MenE subfamily.

It catalyses the reaction 2-succinylbenzoate + ATP + CoA = 2-succinylbenzoyl-CoA + AMP + diphosphate. The protein operates within quinol/quinone metabolism; 1,4-dihydroxy-2-naphthoate biosynthesis; 1,4-dihydroxy-2-naphthoate from chorismate: step 5/7. Its pathway is quinol/quinone metabolism; menaquinone biosynthesis. Its function is as follows. Converts 2-succinylbenzoate (OSB) to 2-succinylbenzoyl-CoA (OSB-CoA). The polypeptide is 2-succinylbenzoate--CoA ligase (Haemophilus influenzae (strain ATCC 51907 / DSM 11121 / KW20 / Rd)).